Here is a 428-residue protein sequence, read N- to C-terminus: GTPase Obg (428 aa).

The 158-residue stretch at 1–158 (MFVDQVQVEV…RFIKLELKVL (158 aa)) folds into the Obg domain. The region spanning 159 to 333 (ADVGLVGFPS…LMHKTAEVLK (175 aa)) is the OBG-type G domain. GTP is bound by residues 165-172 (GFPSVGKS), 190-194 (FTTLV), 212-215 (DLPG), 282-285 (TKMD), and 314-316 (SSL). Mg(2+)-binding residues include serine 172 and threonine 192. The 79-residue stretch at 350–428 (YKYQPEPALK…IDDFTFEFVE (79 aa)) folds into the OCT domain.

The protein belongs to the TRAFAC class OBG-HflX-like GTPase superfamily. OBG GTPase family. In terms of assembly, monomer. Mg(2+) serves as cofactor.

The protein resides in the cytoplasm. An essential GTPase which binds GTP, GDP and possibly (p)ppGpp with moderate affinity, with high nucleotide exchange rates and a fairly low GTP hydrolysis rate. Plays a role in control of the cell cycle, stress response, ribosome biogenesis and in those bacteria that undergo differentiation, in morphogenesis control. This Lacticaseibacillus casei (strain BL23) (Lactobacillus casei) protein is GTPase Obg.